Here is an 83-residue protein sequence, read N- to C-terminus: UPF0729 protein CBG02799 (83 aa).

The interval 51-83 (QEKKEEEEEKEKSCCSTEAENTTEVTTETKKDQ) is disordered. Over residues 67-76 (TEAENTTEVT) the composition is skewed to low complexity.

The protein belongs to the UPF0729 family.

This Caenorhabditis briggsae protein is UPF0729 protein CBG02799.